We begin with the raw amino-acid sequence, 602 residues long: Elongation factor 4 (602 aa).

The 183-residue stretch at 6-188 folds into the tr-type G domain; sequence DHIRNFSIVA…AIVNKLPAPK (183 aa). Residues 18 to 23 and 135 to 138 contribute to the GTP site; these read DHGKST and NKID.

It belongs to the TRAFAC class translation factor GTPase superfamily. Classic translation factor GTPase family. LepA subfamily.

It is found in the cell inner membrane. It carries out the reaction GTP + H2O = GDP + phosphate + H(+). Required for accurate and efficient protein synthesis under certain stress conditions. May act as a fidelity factor of the translation reaction, by catalyzing a one-codon backward translocation of tRNAs on improperly translocated ribosomes. Back-translocation proceeds from a post-translocation (POST) complex to a pre-translocation (PRE) complex, thus giving elongation factor G a second chance to translocate the tRNAs correctly. Binds to ribosomes in a GTP-dependent manner. The sequence is that of Elongation factor 4 from Brucella abortus (strain 2308).